We begin with the raw amino-acid sequence, 121 residues long: Holin-like protein CidA (121 aa).

The next 4 helical transmembrane spans lie at 3–23 (WWKL…GEWI), 30–50 (PVPG…FNLV), 58–78 (GADF…VAVI), and 89–109 (IDLI…TGLL).

The protein belongs to the CidA/LrgA family. CidA subfamily.

The protein resides in the cell membrane. In terms of biological role, increases the activity of extracellular murein hydrolases possibly by mediating their export via hole formation. Inhibited by the antiholin-like proteins LrgAB. In an unstressed cell, the LrgAB products probably inhibit the function of the CidA protein. When a cell is stressed by the addition of antibiotics or by other factors in the environment, CidA possibly oligomerizes within the bacterial cell membrane, creating lesions that disrupt the proton motive force, which in turn results in loss of cell viability. These lesions are also hypothesized to regulate the subsequent cell lysis by either allowing the murein hydrolases access to the cell wall substrate and/or regulating their activity by a possible change in the cell wall pH that results from loss of membrane potential. In Bacillus cereus (strain ATCC 10987 / NRS 248), this protein is Holin-like protein CidA.